Consider the following 67-residue polypeptide: Probable tautomerase bsl7456 (67 aa).

P2 serves as the catalytic Proton acceptor; via imino nitrogen.

Belongs to the 4-oxalocrotonate tautomerase family.

This chain is Probable tautomerase bsl7456, found in Bradyrhizobium diazoefficiens (strain JCM 10833 / BCRC 13528 / IAM 13628 / NBRC 14792 / USDA 110).